A 186-amino-acid chain; its full sequence is Adenine phosphoribosyltransferase (186 aa).

This sequence belongs to the purine/pyrimidine phosphoribosyltransferase family. As to quaternary structure, homodimer.

It localises to the cytoplasm. The enzyme catalyses AMP + diphosphate = 5-phospho-alpha-D-ribose 1-diphosphate + adenine. The protein operates within purine metabolism; AMP biosynthesis via salvage pathway; AMP from adenine: step 1/1. Functionally, catalyzes a salvage reaction resulting in the formation of AMP, that is energically less costly than de novo synthesis. The chain is Adenine phosphoribosyltransferase from Xanthomonas euvesicatoria pv. vesicatoria (strain 85-10) (Xanthomonas campestris pv. vesicatoria).